The primary structure comprises 545 residues: Tripartite motif-containing protein 55 (545 aa).

The segment at 26–82 adopts an RING-type zinc-finger fold; it reads CPICLEMFTKPVVILPCQHNLCRKCASDIFQASNPYLPTRGGTTVASGGRFRCPSCR. The B box-type zinc-finger motif lies at 119-161; it reads LDQPMCEEHEEERINIYCLNCEVPTCSLCKVFGAHKDCQVAPL. 4 residues coordinate Zn(2+): C124, H127, C147, and H153. Residues 219 to 258 adopt a coiled-coil conformation; sequence YSILEERKTEMTQAITRTQEEKLEHVRTLIRKYSDHLENV. The COS domain occupies 269–327; it reads MDEPEMAVFLQNAKTLLQKITEASKAFQMEKIEQGYEIMNNFTVNLNREEKIIREIDFS. Disordered regions lie at residues 324–378 and 406–528; these read IDFS…SELA and LVTQ…GADS. Positions 328 to 355 are enriched in acidic residues; that stretch reads REEEDEDDEGEVDEEGEGEDAVEVEEAE. 2 stretches are compositionally biased toward low complexity: residues 417–426 and 469–493; these read SQQTTQSETS and SAAE…AAVS. Residues 495-506 are compositionally biased toward polar residues; the sequence is KESSSTAATSQI. The span at 510 to 520 shows a compositional bias: low complexity; that stretch reads ASSPQGQAAAL.

In terms of assembly, homooligomer and heterooligomer. Interacts with titin/TTN. Interacts with myosins. Interacts with SQSTM1 and NBR1. Probably interacts with TRIM63 and TRIM54. In terms of processing, targeted for degradation through the proteasomal and lysosomal pathways in the presence of SUMO3.

It is found in the nucleus. The protein resides in the cytoplasm. The catalysed reaction is S-ubiquitinyl-[E2 ubiquitin-conjugating enzyme]-L-cysteine + [acceptor protein]-L-lysine = [E2 ubiquitin-conjugating enzyme]-L-cysteine + N(6)-ubiquitinyl-[acceptor protein]-L-lysine.. E3 ubiquitin ligase that plays an important role in regulating cardiac development and contractility, muscle growth, metabolism, and fiber-type differentiation. Acts as a critical factor that regulates cardiomyocyte size during development in concert with TRIM63 by regulating E2F1-mediated gene expression. Plays a role in apoptosis induction in cardiomyocytes by promoting ubiquitination of the DUSP1 phosphatase. Promotes non-canonical NF-kappa-B signaling and B-cell-mediated immune responses by mediating NFKB2 'Lys-48'-linked ubiquitination and processing. In turn, NFKB2 is further processed by valosin-containing protein/VCP, an ATPase that mediates ubiquitin-dependent protein degradation by the proteasome. May play a role in preventing macrophages from producing inflammatory factors and migrating by downregulating the level of nuclear NF-kappa-B subunit RELA. Also modifies PPARG via polyubiquitination and accelerates PPARG proteasomal degradation to inhibit its activity. This chain is Tripartite motif-containing protein 55 (Trim55), found in Rattus norvegicus (Rat).